The sequence spans 345 residues: MSTPTQLSYKDAGVDIDAGNALVDNIKTAVKRTHRPEIMGNLGGFGALCELPTKYKHPVLVSGTDGVGTKLRLAIDHKKHDTVGIDLVAMCSNDLIVSGAEPLFFLDYYATGKLDVEAATSVVKGIAEGCVQSGCALIGGETAEMPGMYEGDDYDLAGFCVGVVEKADIIDGSKVVAGDSLIALASSGPHSNGFSLIRKVLEVSEADPQLNLEGKPLIDHLLEPTKIYVKSLLKLLEQTDVHAMAHITGGGFWENIPRVLPEDCKAVVKGDSWQWPTVFNWLMENGNIAEFEMYRTFNCGVGMVVALPSEKVDAALTLLNAEGENAWLIGDIAKRNGDEEQVEIL.

It belongs to the AIR synthase family.

It localises to the cytoplasm. The enzyme catalyses 2-formamido-N(1)-(5-O-phospho-beta-D-ribosyl)acetamidine + ATP = 5-amino-1-(5-phospho-beta-D-ribosyl)imidazole + ADP + phosphate + H(+). The protein operates within purine metabolism; IMP biosynthesis via de novo pathway; 5-amino-1-(5-phospho-D-ribosyl)imidazole from N(2)-formyl-N(1)-(5-phospho-D-ribosyl)glycinamide: step 2/2. This chain is Phosphoribosylformylglycinamidine cyclo-ligase, found in Shewanella sediminis (strain HAW-EB3).